The primary structure comprises 127 residues: Prefoldin subunit 6 (127 aa).

The residue at position 2 (Ala-2) is an N-acetylalanine. Lys-21 carries the N6-acetyllysine modification. An N6-acetyllysine; alternate modification is found at Lys-66. Lys-66 is covalently cross-linked (Glycyl lysine isopeptide (Lys-Gly) (interchain with G-Cter in SUMO1); alternate). Lys-66 participates in a covalent cross-link: Glycyl lysine isopeptide (Lys-Gly) (interchain with G-Cter in SUMO2); alternate.

Belongs to the prefoldin subunit beta family. Heterohexamer of two PFD-alpha type and four PFD-beta type subunits. Component of the PAQosome complex which is responsible for the biogenesis of several protein complexes and which consists of R2TP complex members RUVBL1, RUVBL2, RPAP3 and PIH1D1, URI complex members PFDN2, PFDN6, PDRG1, UXT and URI1 as well as ASDURF, POLR2E and DNAAF10/WDR92.

Binds specifically to cytosolic chaperonin (c-CPN) and transfers target proteins to it. Binds to nascent polypeptide chain and promotes folding in an environment in which there are many competing pathways for nonnative proteins. The sequence is that of Prefoldin subunit 6 (Pfdn6) from Mus musculus (Mouse).